The chain runs to 158 residues: MTVQLSNLEHLPNYQITERLDVVYGSTVRSKHVGKDLFAGLKNIVGGELTAYTELLEESRQEAIDRMIVKAEALGADAVVGLRFSTSSIAQGASELFVYGTAVKAVPMQQQPIYQSSNQPPSHHSGHSQYEEPVPSAAQPSTTAQANDDLPRFNPFGE.

Positions 113 to 122 are enriched in polar residues; that stretch reads IYQSSNQPPS. The segment at 113-158 is disordered; that stretch reads IYQSSNQPPSHHSGHSQYEEPVPSAAQPSTTAQANDDLPRFNPFGE.

The protein belongs to the UPF0145 family.

This chain is UPF0145 protein Psyc_1853, found in Psychrobacter arcticus (strain DSM 17307 / VKM B-2377 / 273-4).